A 275-amino-acid chain; its full sequence is Protein COFACTOR ASSEMBLY OF COMPLEX C SUBUNIT B CCB2, chloroplastic (275 aa).

The N-terminal 19 residues, 1–19 (MSIQICNFPFHPKFALQPR), are a transit peptide targeting the chloroplast. Topologically, residues 20 to 65 (AQRSTRIFARTENDSPQSKTSDQQLNLSVLRFTFGIPGFDESYLPR) are stromal. The chain crosses the membrane as a helical span at residues 66-86 (WIGYGFGSLLLLNHFSASAPI). Over 87 to 93 (SESQMRS) the chain is Lumenal. Residues 94 to 114 (EALGLSLAAFSIALPYIGKFL) traverse the membrane as a helical segment. Over 115–275 (KGSVVEQRSL…IGAMAEKFRG (161 aa)) the chain is Stromal.

It localises to the plastid. The protein localises to the chloroplast thylakoid membrane. Functionally, required for the biogenesis and accumulation of native cytochrome b6 in the thylakoid membrane. Controls the conversion of apocytochrome b6 to holocytochrome b6. Required for covalent binding of the c-type heme to cytochrome b6. The protein is Protein COFACTOR ASSEMBLY OF COMPLEX C SUBUNIT B CCB2, chloroplastic of Arabidopsis thaliana (Mouse-ear cress).